A 127-amino-acid polypeptide reads, in one-letter code: Thioredoxin domain-containing protein 8 (127 aa).

Residues 1–92 form the Thioredoxin domain; it reads MVQIIKDTNE…SQKVTLFSRI (92 aa). C32 and C35 are oxidised to a cystine.

The protein belongs to the thioredoxin family. As to expression, testis-specific. Only expressed during spermiogenesis, prominently in the Golgi apparatus of pachytene spermatocytes and round and elongated spermatids, with a transient localization in the developing acrosome of round spermatids (at protein level).

Its subcellular location is the cytoplasm. It localises to the golgi apparatus. May be required for post-translational modifications of proteins required for acrosomal biogenesis. May act by reducing disulfide bonds within the sperm. The protein is Thioredoxin domain-containing protein 8 (TXNDC8) of Homo sapiens (Human).